The chain runs to 139 residues: uncharacterized protein (139 aa).

Positions 1–116 (MYNPWQVGAS…TRPRVVARGK (116 aa)) are disordered. Composition is skewed to low complexity over residues 50–70 (RPRP…GPRP) and 84–110 (LPAY…TRPR).

This is an uncharacterized protein from Homo sapiens (Human).